Consider the following 298-residue polypeptide: Elongation factor Ts (298 aa).

Residues 80 to 83 form an involved in Mg(2+) ion dislocation from EF-Tu region; sequence TDFV.

The protein belongs to the EF-Ts family.

It is found in the cytoplasm. Associates with the EF-Tu.GDP complex and induces the exchange of GDP to GTP. It remains bound to the aminoacyl-tRNA.EF-Tu.GTP complex up to the GTP hydrolysis stage on the ribosome. The protein is Elongation factor Ts of Acidovorax sp. (strain JS42).